We begin with the raw amino-acid sequence, 280 residues long: 4-deoxy-L-threo-5-hexosulose-uronate ketol-isomerase 1 (280 aa).

Residues His198, His200, Glu205, and His247 each coordinate Zn(2+).

Belongs to the KduI family. Requires Zn(2+) as cofactor.

It catalyses the reaction 5-dehydro-4-deoxy-D-glucuronate = 3-deoxy-D-glycero-2,5-hexodiulosonate. It participates in glycan metabolism; pectin degradation; 2-dehydro-3-deoxy-D-gluconate from pectin: step 4/5. Catalyzes the isomerization of 5-dehydro-4-deoxy-D-glucuronate to 3-deoxy-D-glycero-2,5-hexodiulosonate. The sequence is that of 4-deoxy-L-threo-5-hexosulose-uronate ketol-isomerase 1 (kduI1) from Bacteroides thetaiotaomicron (strain ATCC 29148 / DSM 2079 / JCM 5827 / CCUG 10774 / NCTC 10582 / VPI-5482 / E50).